We begin with the raw amino-acid sequence, 616 residues long: uncharacterized protein (616 aa).

Belongs to the UbiD family.

This is an uncharacterized protein from Helicobacter pylori (strain ATCC 700392 / 26695) (Campylobacter pylori).